Reading from the N-terminus, the 35-residue chain is 30 kDa neutral phosphatase (35 aa).

Over residues 1–28 (KSSAEVQQTQQASIPASQKANLGNQNNI) the composition is skewed to polar residues. The tract at residues 1-35 (KSSAEVQQTQQASIPASQKANLGNQNNIMXVAXYQ) is disordered.

In terms of biological role, highly cationic enzyme that can bind human or rat immunoglobulins as well as serum albumin, and could therefore be involved in post-infectious sequelae. The sequence is that of 30 kDa neutral phosphatase from Staphylococcus aureus.